The sequence spans 150 residues: Protein NrdI (150 aa).

Belongs to the NrdI family.

Probably involved in ribonucleotide reductase function. The sequence is that of Protein NrdI from Mycobacterium avium (strain 104).